Consider the following 303-residue polypeptide: ATP phosphoribosyltransferase (303 aa).

It belongs to the ATP phosphoribosyltransferase family. Long subfamily. The cofactor is Mg(2+).

It localises to the cytoplasm. It catalyses the reaction 1-(5-phospho-beta-D-ribosyl)-ATP + diphosphate = 5-phospho-alpha-D-ribose 1-diphosphate + ATP. It participates in amino-acid biosynthesis; L-histidine biosynthesis; L-histidine from 5-phospho-alpha-D-ribose 1-diphosphate: step 1/9. With respect to regulation, feedback inhibited by histidine. Its function is as follows. Catalyzes the condensation of ATP and 5-phosphoribose 1-diphosphate to form N'-(5'-phosphoribosyl)-ATP (PR-ATP). Has a crucial role in the pathway because the rate of histidine biosynthesis seems to be controlled primarily by regulation of HisG enzymatic activity. This chain is ATP phosphoribosyltransferase, found in Haemophilus influenzae (strain PittEE).